We begin with the raw amino-acid sequence, 185 residues long: HTH-type transcriptional regulator Hpr (185 aa).

One can recognise an HTH marR-type domain in the interval 13 to 157 (AMIFSQRIAQ…LIAILRNIYG (145 aa)). A DNA-binding region (H-T-H motif) is located at residues 63–86 (ISEIAKFGVMHVSTAFNFSKKLEE).

Homodimer.

Negative regulator of protease production and sporulation. The protein is HTH-type transcriptional regulator Hpr of Bacillus mycoides (strain KBAB4) (Bacillus weihenstephanensis).